The sequence spans 320 residues: Adhesin MafA 1 (320 aa).

A signal peptide spans 1 to 18 (MQARLLIPILFSVFILSA). Residue Cys19 is the site of N-palmitoyl cysteine attachment. Cys19 is lipidated: S-diacylglycerol cysteine. Residues 288 to 320 (HMGNSAPSVEADNSHEGYGYSDEAVRRHRQGQP) form a disordered region.

The protein belongs to the MafA family.

It is found in the cell outer membrane. This is Adhesin MafA 1 (mafA1) from Neisseria meningitidis serogroup A / serotype 4A (strain DSM 15465 / Z2491).